We begin with the raw amino-acid sequence, 193 residues long: Imidazoleglycerol-phosphate dehydratase (193 aa).

Belongs to the imidazoleglycerol-phosphate dehydratase family.

Its subcellular location is the cytoplasm. It catalyses the reaction D-erythro-1-(imidazol-4-yl)glycerol 3-phosphate = 3-(imidazol-4-yl)-2-oxopropyl phosphate + H2O. The protein operates within amino-acid biosynthesis; L-histidine biosynthesis; L-histidine from 5-phospho-alpha-D-ribose 1-diphosphate: step 6/9. The protein is Imidazoleglycerol-phosphate dehydratase of Saccharolobus islandicus (strain M.14.25 / Kamchatka #1) (Sulfolobus islandicus).